The sequence spans 149 residues: Large ribosomal subunit protein bL9 (149 aa).

This sequence belongs to the bacterial ribosomal protein bL9 family.

Its function is as follows. Binds to the 23S rRNA. The chain is Large ribosomal subunit protein bL9 from Geobacillus thermodenitrificans (strain NG80-2).